The following is a 512-amino-acid chain: Cercosporin MFS transporter CTB4 (512 aa).

Helical transmembrane passes span 72-92 (WVIT…SSVF), 110-130 (VVLG…IFWG), 142-162 (LLAG…ARSL), 170-190 (FLGG…LADI), 202-222 (TVGA…SVLV), 230-250 (WIAN…FPFL), 306-326 (ILLM…NFFL), 343-363 (ASLP…LLSF), 383-403 (LLLM…FAWT), 407-427 (TMNP…IHLI), 456-476 (LFAA…GVKW), and 480-500 (ILAL…YFGA).

The protein belongs to the major facilitator superfamily. CAR1 family.

It is found in the cell membrane. Its function is as follows. MFS transporter; part of the gene cluster that mediates the biosynthesis of cercosporin, a light-activated, non-host-selective toxin. The perylenequinone chromophore of cercosporin absorbs light energy to attain an electronically-activated triplet state and produces active oxygen species such as the hydroxyl radical, superoxide, hydrogen peroxide or singlet oxygen upon reaction with oxygen molecules. These reactive oxygen species cause damage to various cellular components including lipids, proteins and nucleic acids. Responsible for secretion and accumulation of cercosporin, but does not play any roles in self-protection against the toxicity of cercosporin. This chain is Cercosporin MFS transporter CTB4, found in Cercospora nicotianae (Barn spot disease fungus).